The chain runs to 225 residues: Phosphoserine phosphatase (225 aa).

Met-1 is modified (N-acetylmethionine). The Nucleophile role is filled by Asp-20. Residues Asp-20 and Asp-22 each contribute to the Mg(2+) site. 20 to 22 (DVD) lines the L-serine pocket. Asp-22 (proton donor) is an active-site residue. Met-52 contacts O-phospho-L-serine. Gly-53 serves as a coordination point for phosphate. Residues 109–111 (SGG) and Lys-158 contribute to the L-serine site. O-phospho-L-serine-binding positions include 109-111 (SGG) and Lys-158. Position 179 (Asp-179) interacts with Mg(2+). Residue Thr-182 coordinates O-phospho-L-serine. Phosphate is bound at residue Thr-182.

It belongs to the HAD-like hydrolase superfamily. SerB family. As to quaternary structure, homodimer. Requires Mg(2+) as cofactor.

The protein localises to the cytoplasm. The protein resides in the cytosol. It carries out the reaction O-phospho-L-serine + H2O = L-serine + phosphate. It catalyses the reaction O-phospho-D-serine + H2O = D-serine + phosphate. The protein operates within amino-acid biosynthesis; L-serine biosynthesis; L-serine from 3-phospho-D-glycerate: step 3/3. Catalyzes the last irreversible step in the biosynthesis of L-serine from carbohydrates, the dephosphorylation of O-phospho-L-serine to L-serine. L-serine can then be used in protein synthesis, to produce other amino acids, in nucleotide metabolism or in glutathione synthesis, or can be racemized to D-serine, a neuromodulator. May also act on O-phospho-D-serine. The sequence is that of Phosphoserine phosphatase from Mus musculus (Mouse).